A 322-amino-acid polypeptide reads, in one-letter code: NADH-cytochrome b5 reductase 2 (322 aa).

Residues Leu30–Leu46 traverse the membrane as a helical segment. Residues Gln71 to Glu176 enclose the FAD-binding FR-type domain. Lys179–Leu214 is a binding site for FAD.

Belongs to the flavoprotein pyridine nucleotide cytochrome reductase family. FAD serves as cofactor.

The protein localises to the mitochondrion outer membrane. It carries out the reaction 2 Fe(III)-[cytochrome b5] + NADH = 2 Fe(II)-[cytochrome b5] + NAD(+) + H(+). Functionally, may mediate the reduction of outer membrane cytochrome b5. This chain is NADH-cytochrome b5 reductase 2 (mcr1), found in Emericella nidulans (strain FGSC A4 / ATCC 38163 / CBS 112.46 / NRRL 194 / M139) (Aspergillus nidulans).